A 138-amino-acid polypeptide reads, in one-letter code: Large ribosomal subunit protein uL16 (138 aa).

A compositionally biased stretch (basic residues) spans 1–13; that stretch reads MLQPKRRKYRKEQ. The tract at residues 1 to 24 is disordered; it reads MLQPKRRKYRKEQKGRNTGKATRG.

Belongs to the universal ribosomal protein uL16 family. Part of the 50S ribosomal subunit.

Its function is as follows. Binds 23S rRNA and is also seen to make contacts with the A and possibly P site tRNAs. The polypeptide is Large ribosomal subunit protein uL16 (Burkholderia lata (strain ATCC 17760 / DSM 23089 / LMG 22485 / NCIMB 9086 / R18194 / 383)).